Consider the following 138-residue polypeptide: ATP synthase epsilon chain (138 aa).

This sequence belongs to the ATPase epsilon chain family. In terms of assembly, F-type ATPases have 2 components, CF(1) - the catalytic core - and CF(0) - the membrane proton channel. CF(1) has five subunits: alpha(3), beta(3), gamma(1), delta(1), epsilon(1). CF(0) has three main subunits: a, b and c.

The protein resides in the cell inner membrane. In terms of biological role, produces ATP from ADP in the presence of a proton gradient across the membrane. In Psychrobacter sp. (strain PRwf-1), this protein is ATP synthase epsilon chain.